The following is a 305-amino-acid chain: Ribonuclease BN (305 aa).

Residues histidine 64, histidine 66, aspartate 68, histidine 69, histidine 141, aspartate 212, and histidine 270 each contribute to the Zn(2+) site. Aspartate 68 serves as the catalytic Proton acceptor.

It belongs to the RNase Z family. RNase BN subfamily. As to quaternary structure, homodimer. The cofactor is Zn(2+).

Functionally, zinc phosphodiesterase, which has both exoribonuclease and endoribonuclease activities. This is Ribonuclease BN from Citrobacter koseri (strain ATCC BAA-895 / CDC 4225-83 / SGSC4696).